The sequence spans 126 residues: Large ribosomal subunit protein bL20c (126 aa).

It belongs to the bacterial ribosomal protein bL20 family.

The protein localises to the plastid. The protein resides in the chloroplast. Its function is as follows. Binds directly to 23S ribosomal RNA and is necessary for the in vitro assembly process of the 50S ribosomal subunit. It is not involved in the protein synthesizing functions of that subunit. This chain is Large ribosomal subunit protein bL20c, found in Guizotia abyssinica (Niger).